We begin with the raw amino-acid sequence, 227 residues long: Cytochrome c oxidase subunit 2 (227 aa).

Residues 1-22 lie on the Mitochondrial intermembrane side of the membrane; that stretch reads MAYPFQLGLQDATSPIMEELMN. Residues 23 to 44 form a helical membrane-spanning segment; that stretch reads FHDHTLMIVFLISSLVLYIISL. Topologically, residues 45-60 are mitochondrial matrix; the sequence is MLTTKLTHTSTMDAQE. Residues 61–81 traverse the membrane as a helical segment; sequence VETIWTILPAVILIMIALPSL. Residues 82-227 are Mitochondrial intermembrane-facing; the sequence is RILYMMDEIN…YFENWSASMI (146 aa). His-161, Cys-196, Glu-198, Cys-200, His-204, and Met-207 together coordinate Cu cation. Residue Glu-198 coordinates Mg(2+). Position 218 is a phosphotyrosine (Tyr-218).

The protein belongs to the cytochrome c oxidase subunit 2 family. In terms of assembly, component of the cytochrome c oxidase (complex IV, CIV), a multisubunit enzyme composed of 14 subunits. The complex is composed of a catalytic core of 3 subunits MT-CO1, MT-CO2 and MT-CO3, encoded in the mitochondrial DNA, and 11 supernumerary subunits COX4I, COX5A, COX5B, COX6A, COX6B, COX6C, COX7A, COX7B, COX7C, COX8 and NDUFA4, which are encoded in the nuclear genome. The complex exists as a monomer or a dimer and forms supercomplexes (SCs) in the inner mitochondrial membrane with NADH-ubiquinone oxidoreductase (complex I, CI) and ubiquinol-cytochrome c oxidoreductase (cytochrome b-c1 complex, complex III, CIII), resulting in different assemblies (supercomplex SCI(1)III(2)IV(1) and megacomplex MCI(2)III(2)IV(2)). Found in a complex with TMEM177, COA6, COX18, COX20, SCO1 and SCO2. Interacts with TMEM177 in a COX20-dependent manner. Interacts with COX20. Interacts with COX16. Requires Cu cation as cofactor.

Its subcellular location is the mitochondrion inner membrane. The enzyme catalyses 4 Fe(II)-[cytochrome c] + O2 + 8 H(+)(in) = 4 Fe(III)-[cytochrome c] + 2 H2O + 4 H(+)(out). Its function is as follows. Component of the cytochrome c oxidase, the last enzyme in the mitochondrial electron transport chain which drives oxidative phosphorylation. The respiratory chain contains 3 multisubunit complexes succinate dehydrogenase (complex II, CII), ubiquinol-cytochrome c oxidoreductase (cytochrome b-c1 complex, complex III, CIII) and cytochrome c oxidase (complex IV, CIV), that cooperate to transfer electrons derived from NADH and succinate to molecular oxygen, creating an electrochemical gradient over the inner membrane that drives transmembrane transport and the ATP synthase. Cytochrome c oxidase is the component of the respiratory chain that catalyzes the reduction of oxygen to water. Electrons originating from reduced cytochrome c in the intermembrane space (IMS) are transferred via the dinuclear copper A center (CU(A)) of subunit 2 and heme A of subunit 1 to the active site in subunit 1, a binuclear center (BNC) formed by heme A3 and copper B (CU(B)). The BNC reduces molecular oxygen to 2 water molecules using 4 electrons from cytochrome c in the IMS and 4 protons from the mitochondrial matrix. The protein is Cytochrome c oxidase subunit 2 (Mtco2) of Mus musculus (Mouse).